Here is a 201-residue protein sequence, read N- to C-terminus: MIFSIEDDAPIVRDLLPDWRARFGEAGGRLELEIGCGHGGFALGFARAFPERALVGIEQRRKFAAELAAKGARHGLSNLLVLNGDARLLAPRLFAAGSLAAIHVHFPDPWWKRRHHRRRLVDDRMSALLLGLLAPGGVLDFRTDVERYAREAVVRLEEVGFRNAAGPGRFAEAAPDEIPSTRERRYLASGEPVWRLRLVKA.

S-adenosyl-L-methionine contacts are provided by E33, E58, D85, and D108. Residue D108 is part of the active site. Residues K112 and D144 each contribute to the substrate site.

It belongs to the class I-like SAM-binding methyltransferase superfamily. TrmB family.

It catalyses the reaction guanosine(46) in tRNA + S-adenosyl-L-methionine = N(7)-methylguanosine(46) in tRNA + S-adenosyl-L-homocysteine. Its pathway is tRNA modification; N(7)-methylguanine-tRNA biosynthesis. In terms of biological role, catalyzes the formation of N(7)-methylguanine at position 46 (m7G46) in tRNA. This is tRNA (guanine-N(7)-)-methyltransferase from Anaeromyxobacter dehalogenans (strain 2CP-C).